The primary structure comprises 598 residues: MVRDRVIELFRKALAQGADDGRWPAAGAGFSVEAPRDPKHGDFAVNAAMVLAKQAGRPPRELAQAIVEAVRAADTAGDLAGLEIAGPGFINVRLSPDLWLRTLARAVAEGPDYGRTAVGQGKKVIVEYVSANPTGPMHVGHGRNAVVGDGVQGLLRWAGFDVTREYYVNDYGAQVQTLARSVHLRYQELHGRTVTMPPKSYPGEYVKDIAAGLKAEYGARFLDAPEAEWLTLFRDHAVQHVLGMIRGDLAAVNISFDRWSSEKALYESGTVDRFLRFLEEKDLVYVGKLPPPKSKKGQPPAQPQPDEEGVTAAEDLTLFRSSAYGDEVDRPVKKADGTPTYFCADIAYHWDKRQRADALVDVLGADHGGYVPRLEAAMEALGASRKDLHVVLIQMVSLMRGGESVKMSKRAGTLVSLREVVDEVGRDATRFIFLTRRSDAPLDFDVELAKRQTLDNPVFYVQYGHARLAAIFQKAREAGHAVPDFDLEAARTLASPEEQDLIRRIAAFPDMLAAAALAYEPHRVAFYLQETIAAFHSWYTQGKKSGEKVIGPDPVKTAARLFLCRALKQVLANGLAVLGVSAPDRMESPETRDIADDV.

Positions 131-141 (ANPTGPMHVGH) match the 'HIGH' region motif. Residues 288 to 308 (KLPPPKSKKGQPPAQPQPDEE) form a disordered region.

This sequence belongs to the class-I aminoacyl-tRNA synthetase family. Monomer.

It is found in the cytoplasm. The catalysed reaction is tRNA(Arg) + L-arginine + ATP = L-arginyl-tRNA(Arg) + AMP + diphosphate. In Anaeromyxobacter sp. (strain K), this protein is Arginine--tRNA ligase.